The following is a 316-amino-acid chain: D-alanine--D-alanine ligase (316 aa).

The ATP-grasp domain occupies Lys-112–Glu-310. Residue Met-139 to Thr-189 coordinates ATP. Positions 261, 277, and 279 each coordinate Mg(2+).

This sequence belongs to the D-alanine--D-alanine ligase family. Mg(2+) is required as a cofactor. Mn(2+) serves as cofactor.

The protein resides in the cytoplasm. The catalysed reaction is 2 D-alanine + ATP = D-alanyl-D-alanine + ADP + phosphate + H(+). It participates in cell wall biogenesis; peptidoglycan biosynthesis. In terms of biological role, cell wall formation. The chain is D-alanine--D-alanine ligase from Jannaschia sp. (strain CCS1).